Consider the following 208-residue polypeptide: UPF0637 protein lp_2332 (208 aa).

The protein belongs to the UPF0637 family.

This Lactiplantibacillus plantarum (strain ATCC BAA-793 / NCIMB 8826 / WCFS1) (Lactobacillus plantarum) protein is UPF0637 protein lp_2332.